A 179-amino-acid chain; its full sequence is Stathmin-2 (179 aa).

The interval 1–26 (MAKTAMAYKEKMKELSMLSLICSCFY) is membrane attachment. Ser16, Ser50, Ser62, Ser73, Ser80, and Ser97 each carry phosphoserine. The SLD domain maps to 38-179 (DDMEVKQINK…NKELQVELSG (142 aa)). The regulatory/phosphorylation domain stretch occupies residues 39–96 (DMEVKQINKRASGQAFELILKPPSPVSEAPRTLASPKKKELSLEEIQKKLEAAEERRK). Residues 74–179 (PKKKELSLEE…NKELQVELSG (106 aa)) adopt a coiled-coil conformation.

It belongs to the stathmin family. Expression is neuron-specific and found in cerebellum, forebrain, midbrain, tectum and spinal cord.

It is found in the cytoplasm. The protein resides in the perinuclear region. The protein localises to the cell projection. Its subcellular location is the growth cone. It localises to the membrane. It is found in the axon. The protein resides in the lamellipodium. Its function is as follows. Is a key regulator of neurite extension through regulation of microtubule instabilily. This is Stathmin-2 (STMN2) from Gallus gallus (Chicken).